The sequence spans 489 residues: MAKDVRVGYAPSPTGHLHIGGARTALFNYLFARHHGGKMIVRIEDTDIERNVEGGEQSQLENLQWLGIDYDESVDKDGGYGPYRQTERLDIYRKYVDELLEQGHAYKCFCTPEELEREREEQRAAGIAAPQYSGKCRRLTPEQVAELEAQGKPYTIRLKVPEGKTYEVDDLVRGKVTFESKDIGDWVIVKANGIPTYNFAVVIDDHLMEISHVFRGEEHLSNTPKQLMVYEYFGWEPPQFAHLTLIVNEQRKKLSKRDESIIQFVSQYKELGYLPEAMFNFFALLGWSPEGEEEIFSKDELIRIFDVSRLSKSPSMFDTKKLTWMNNQYIKKLDLDRLVELALPHLVKAGRLPADMSDEQRQWARDLIALYQEQMSYGAEIVPLSELFFKEEVEYEDEARQVLAEEQVPDVLSAFLAHVRDLDPFTADEIKAAIKAVQKATGQKGKKLFMPIRAAVTGQTHGPELPFAIQLLGKQKVIERLERALQEKF.

Residues 11 to 21 (PSPTGHLHIGG) carry the 'HIGH' region motif. Positions 253-257 (KLSKR) match the 'KMSKS' region motif. K256 serves as a coordination point for ATP.

It belongs to the class-I aminoacyl-tRNA synthetase family. Glutamate--tRNA ligase type 1 subfamily. Monomer.

It localises to the cytoplasm. It catalyses the reaction tRNA(Glu) + L-glutamate + ATP = L-glutamyl-tRNA(Glu) + AMP + diphosphate. Catalyzes the attachment of glutamate to tRNA(Glu) in a two-step reaction: glutamate is first activated by ATP to form Glu-AMP and then transferred to the acceptor end of tRNA(Glu). The chain is Glutamate--tRNA ligase from Geobacillus stearothermophilus (Bacillus stearothermophilus).